The following is a 615-amino-acid chain: Proteasome-associated ATPase (615 aa).

A disordered region spans residues M1 to R36. A coiled-coil region spans residues S25–Q102. G302–L307 lines the ATP pocket. The docks into pockets in the proteasome alpha-ring stretch occupies residues Y614–L615.

The protein belongs to the AAA ATPase family. In terms of assembly, homohexamer. Assembles into a hexameric ring structure that caps the 20S proteasome core. Strongly interacts with the prokaryotic ubiquitin-like protein Pup through a hydrophobic interface; the interacting region of ARC lies in its N-terminal coiled-coil domain. There is one Pup binding site per ARC hexamer ring. Upon ATP-binding, the C-terminus of ARC interacts with the alpha-rings of the proteasome core, possibly by binding to the intersubunit pockets.

Its pathway is protein degradation; proteasomal Pup-dependent pathway. Its function is as follows. ATPase which is responsible for recognizing, binding, unfolding and translocation of pupylated proteins into the bacterial 20S proteasome core particle. May be essential for opening the gate of the 20S proteasome via an interaction with its C-terminus, thereby allowing substrate entry and access to the site of proteolysis. Thus, the C-termini of the proteasomal ATPase may function like a 'key in a lock' to induce gate opening and therefore regulate proteolysis. This chain is Proteasome-associated ATPase, found in Mycolicibacterium gilvum (strain PYR-GCK) (Mycobacterium gilvum (strain PYR-GCK)).